Reading from the N-terminus, the 2112-residue chain is Phenolphthiocerol synthesis polyketide synthase type I Pks15/1 (2112 aa).

The Ketosynthase family 3 (KS3) domain occupies 46 to 469 (TEPVAVVGIG…GTNAHLILEE (424 aa)). Catalysis depends on for beta-ketoacyl synthase activity residues Cys216, His351, and His391. An acyltransferase region spans residues 579-893 (TVVVFPGQGA…GQVFTTGVPV (315 aa)). Ser670 (for acyltransferase activity) is an active-site residue. An N-terminal hotdog fold region spans residues 941-1063 (HALLGAVVER…GMLGVAAAET (123 aa)). The dehydratase stretch occupies residues 941–1101 (HALLGAVVER…YAYGPAFQGL (161 aa)). In terms of domain architecture, PKS/mFAS DH spans 941–1215 (HALLGAVVER…TRPITAEQLR (275 aa)). Residue His973 is the Proton acceptor; for dehydratase activity of the active site. The interval 1075–1215 (AESVDISDGY…TRPITAEQLR (141 aa)) is C-terminal hotdog fold. Asp1136 functions as the Proton donor; for dehydratase activity in the catalytic mechanism. An enoylreductase region spans residues 1406–1711 (GTLEDLVIQP…QARHIGKVVL (306 aa)). NADP(+) contacts are provided by residues 1536–1553 (VLIH…VQLA) and 1725–1740 (TVVI…GVLA). A beta-ketoacyl reductase region spans residues 1724–1905 (GTVVITGATG…SLAWGLWEQP (182 aa)). A Carrier domain is found at 2010 to 2085 (ELLVGLVCLQ…AVAEYVAQQM (76 aa)). Residue Ser2045 is modified to O-(pantetheine 4'-phosphoryl)serine. Residues 2084–2100 (QMSGSRPTESGDPTSQV) show a composition bias toward polar residues. Residues 2084–2112 (QMSGSRPTESGDPTSQVVEPAAAEVSVHA) are disordered.

It belongs to the thiolase-like superfamily. Beta-ketoacyl-ACP synthases family. Pantetheine 4'-phosphate serves as cofactor.

The catalysed reaction is a fatty acyl-[ACP] + malonyl-[ACP] + H(+) = a 3-oxoacyl-[ACP] + holo-[ACP] + CO2. Its pathway is lipid metabolism; fatty acid biosynthesis. In terms of biological role, catalyzes the elongation by iterative transfer of p-hydroxybenzoyl group from FadD22 (pHBA-S-FAdD22) to form p-hydroxyphenylalkanoate (pHPA) intermediates during phenolphthiocerol (PPOL) biosynthesis. PPOL is an important intermediate in the biosynthesis of phenolic glycolipid (mycosid B). This Mycobacterium bovis (strain ATCC BAA-935 / AF2122/97) protein is Phenolphthiocerol synthesis polyketide synthase type I Pks15/1 (pks15/1).